Consider the following 441-residue polypeptide: Transforming protein p54/c-ets-1 (441 aa).

The 86-residue stretch at 51-136 folds into the PNT domain; that stretch reads ATFSGFAKEQ…EHLEILQKEE (86 aa). The activation domain; required for transcription activation stretch occupies residues 130 to 243; the sequence is EILQKEEAKP…DNMCMGRASR (114 aa). The helix HI-1 stretch occupies residues 304-312; sequence FKDYVRDRA. The segment at 323-330 is helix HI-2; the sequence is AAALAGYT. A DNA-binding region (ETS) is located at residues 335 to 415; it reads IQLWQFLLEL…AGKRYVYRFV (81 aa). The interval 418–422 is helix H4; it reads LQSLL. The tract at residues 426 to 432 is helix H5; the sequence is PEELHAM.

This sequence belongs to the ETS family. As to quaternary structure, binds DNA as a homodimer; homodimerization is required for transcription activation.

It is found in the nucleus. The protein localises to the cytoplasm. With respect to regulation, autoinhibited by a module composed of four alpha helices (HI-1, HI-2, H4, and H5) that flank the DNA-binding ETS domain, reducing the affinity for DNA. Functionally, transcription factor. Directly controls the expression of cytokine and chemokine genes in a wide variety of different cellular contexts. The polypeptide is Transforming protein p54/c-ets-1 (ETS1) (Gallus gallus (Chicken)).